A 374-amino-acid chain; its full sequence is Chaperone protein DnaJ (374 aa).

Residues 5-70 enclose the J domain; that stretch reads DYYEVLGVAR…DKRARYDRFG (66 aa). A CR-type zinc finger spans residues 135–213; sequence GDEVTLRLPK…CKGSGILQQV (79 aa). Zn(2+)-binding residues include Cys148, Cys151, Cys165, Cys168, Cys187, Cys190, Cys201, and Cys204. CXXCXGXG motif repeat units follow at residues 148-155, 165-172, 187-194, and 201-208; these read CDECNGSG, CRHCGGNG, CPVCRGEG, and CPKCKGSG.

It belongs to the DnaJ family. In terms of assembly, homodimer. It depends on Zn(2+) as a cofactor.

Its subcellular location is the cytoplasm. Its function is as follows. Participates actively in the response to hyperosmotic and heat shock by preventing the aggregation of stress-denatured proteins and by disaggregating proteins, also in an autonomous, DnaK-independent fashion. Unfolded proteins bind initially to DnaJ; upon interaction with the DnaJ-bound protein, DnaK hydrolyzes its bound ATP, resulting in the formation of a stable complex. GrpE releases ADP from DnaK; ATP binding to DnaK triggers the release of the substrate protein, thus completing the reaction cycle. Several rounds of ATP-dependent interactions between DnaJ, DnaK and GrpE are required for fully efficient folding. Also involved, together with DnaK and GrpE, in the DNA replication of plasmids through activation of initiation proteins. The protein is Chaperone protein DnaJ of Nitratidesulfovibrio vulgaris (strain DSM 19637 / Miyazaki F) (Desulfovibrio vulgaris).